Here is a 340-residue protein sequence, read N- to C-terminus: Cell invasion protein SipD (340 aa).

Disordered regions lie at residues 1-26 and 57-76; these read MLNI…PSAS and QAQQ…NDER. Residues 291-319 adopt a coiled-coil conformation; the sequence is FKAQEENLKTTLQTLTQKYSNANSLYDNL.

The protein belongs to the invasin protein D family.

The protein resides in the secreted. Required for translocation of effector proteins via the type III secretion system SPI-1, which is essential for an efficient bacterial internalization. Probably acts by modulating the secretion of SipA, SipB, and SipC. In Salmonella typhi, this protein is Cell invasion protein SipD (sipD).